We begin with the raw amino-acid sequence, 883 residues long: Phosphoenolpyruvate carboxylase (883 aa).

Catalysis depends on residues His138 and Lys546.

This sequence belongs to the PEPCase type 1 family. The cofactor is Mg(2+).

The catalysed reaction is oxaloacetate + phosphate = phosphoenolpyruvate + hydrogencarbonate. Its function is as follows. Forms oxaloacetate, a four-carbon dicarboxylic acid source for the tricarboxylic acid cycle. This Shigella dysenteriae serotype 1 (strain Sd197) protein is Phosphoenolpyruvate carboxylase.